Here is a 642-residue protein sequence, read N- to C-terminus: MDSVSFEDVAVNFTLEEWALLDSSQKKLYEDVMQETFKNLVCLGKKWEDQDIEDDHRNQGKNRRCHMVERLCESRRGSKCGETTSQMPNVNINKETFTGAKPHECSFCGRDFIHHSSLNRHMRSHTGQKPNEYQEYEKQPCKCKAVGKTFSYHHCFRKHERTHTGVKPYECKQCGKAFIYYQPFQRHERTHAGQKPYECKQCGKTFIYYQSFQKHAHTGKKPYECKQCGKAFICYQSFQRHKRTHTGEKPYECKQCGKAFSCPTYFRTHERTHTGEKPYKCKECGKAFSFLSSFRRHKRTHSGEKPYECKECGKAFFYSASFRAHVIIHTGARPYKCKECGKAFNSSNSCRVHERTHIGEKPYECKRCGKSFSWSISLRLHERTHTGEKPYECKQCHKTFSFSSSLREHETTHTGEKPYECKQCGKTFSFSSSLQRHERTHNAEKPYECKQCGKAFRCSSYFRIHERSHTGEKPYECKQCGKVFIRSSSFRLHERTHTGEKPYECKLCGKTFSFSSSLREHEKIHTGNKPFECKQCGKAFLRSSQIRLHERTHTGEKPYQCKQCGKAFISSSKFRMHERTHTGEKPYRCKQCGKAFRFSSSVRIHERSHTGEKPYECKQCGKAFISSSHFRLHERTHMGEKV.

The KRAB domain occupies 4 to 76; the sequence is VSFEDVAVNF…MVERLCESRR (73 aa). The C2H2-type 1 zinc finger occupies 103–125; that stretch reads HECSFCGRDFIHHSSLNRHMRSH. The C2H2-type 2; degenerate zinc-finger motif lies at 141 to 163; the sequence is CKCKAVGKTFSYHHCFRKHERTH. The C2H2-type 3 zinc finger occupies 169–191; it reads YECKQCGKAFIYYQPFQRHERTH. Residues 197–217 form a C2H2-type 4; atypical zinc finger; the sequence is YECKQCGKTFIYYQSFQKHAH. C2H2-type zinc fingers lie at residues 223 to 245, 251 to 273, 279 to 301, 307 to 329, 335 to 357, 363 to 385, 391 to 413, 419 to 441, 447 to 469, 475 to 497, 503 to 525, 531 to 553, 559 to 581, 587 to 609, and 615 to 637; these read YECK…KRTH, YECK…ERTH, YKCK…KRTH, YECK…VIIH, YKCK…ERTH, YECK…ETTH, YECK…ERSH, YECK…EKIH, FECK…ERTH, YQCK…ERTH, and YRCK…ERSH.

The protein belongs to the krueppel C2H2-type zinc-finger protein family.

The protein localises to the nucleus. May be involved in transcriptional regulation. The protein is Zinc finger protein 14 (ZNF14) of Homo sapiens (Human).